A 910-amino-acid polypeptide reads, in one-letter code: von Willebrand factor A domain-containing protein DDB_G0292740 (910 aa).

The 132-residue stretch at 63-194 folds into the VIT domain; it reads AYQYYNVSSF…SITIHITMIS (132 aa). The segment at 297–318 is disordered; the sequence is IKNNPHSDSDSDSDDEENKKEN. One can recognise a VWFA domain in the interval 346–515; that stretch reads EFIFLIDCSG…DMETEVMKLL (170 aa). Residues 703–719 are compositionally biased toward low complexity; it reads QYQQQQQQQQQNFNSGF. The tract at residues 703–815 is disordered; sequence QYQQQQQQQQ…TQSESTPSND (113 aa). The segment covering 720–749 has biased composition (pro residues); the sequence is APPPPPMMSSGPPPPPGSSFGAPPPPPPGG. The span at 750–802 shows a compositional bias: low complexity; sequence AFPTSSISEKKSSSQSSSSYLPPTMSLSRKSSLSPSSPSKNYPSPKLSSPSLS. A compositionally biased stretch (polar residues) spans 803-815; sequence YGSTQSESTPSND.

This is von Willebrand factor A domain-containing protein DDB_G0292740 from Dictyostelium discoideum (Social amoeba).